The primary structure comprises 444 residues: Alpha-(1,3)-fucosyltransferase B (444 aa).

The Cytoplasmic segment spans residues 1–6; sequence MRLAQR. Residues 7 to 27 traverse the membrane as a helical; Signal-anchor for type II membrane protein segment; sequence YGIALVALLMVGATVLFFWSE. Residues 28–444 are Lumenal-facing; that stretch reads NIINYENIKF…GNNCSNSSNT (417 aa). N-linked (GlcNAc...) asparagine glycans are attached at residues Asn279, Asn437, and Asn440.

The protein belongs to the glycosyltransferase 10 family.

It is found in the golgi apparatus. The protein resides in the golgi stack membrane. It participates in protein modification; protein glycosylation. The polypeptide is Alpha-(1,3)-fucosyltransferase B (FucTB) (Drosophila melanogaster (Fruit fly)).